The sequence spans 1213 residues: Hybrid signal transduction histidine kinase K (1213 aa).

Disordered regions lie at residues 1–37, 98–189, 279–392, and 495–565; these read MIEL…NKTN, NNNY…SSSS, NKNV…IPFR, and TTEQ…NYNN. Composition is skewed to low complexity over residues 98 to 162, 171 to 189, 279 to 331, 339 to 371, 498 to 511, and 522 to 565; these read NNNY…QKDQ, SLSS…SSSS, NKNV…NSGA, NNNN…SNNN, QQQQ…QQQQ, and QRQQ…NYNN. 6 helical membrane passes run 600–618, 628–648, 652–672, 676–696, 729–749, and 768–788; these read IIFN…GSNI, LIIG…IFFW, INKP…SLVI, TGSI…ALTI, IQWS…NLYG, and IIDV…QYFI. The Histidine kinase domain occupies 822–1052; that stretch reads TMSHEIRTPL…TFWFILPLEE (231 aa). His825 bears the Phosphohistidine; by autocatalysis mark. The region spanning 1076-1199 is the Response regulatory domain; sequence KVLIAEDNII…QLRSAIEMAI (124 aa). Residue Asp1125 is modified to 4-aspartylphosphate.

Activation probably requires transfer of a phosphate group between a histidine in the kinase core (transmitter) domain and an aspartate of the receiver domain.

The protein localises to the nucleus membrane. The enzyme catalyses ATP + protein L-histidine = ADP + protein N-phospho-L-histidine.. In terms of biological role, involved in a signal transduction pathway that regulates morphogenesis and controls entry into the culmination stage. May act via the regA pathway, being activated by a morphogenesis-stimulated ligand, reducing phosphodiesterase regA levels and allowing cAMP level to rise to promote the culmination stage. This protein probably undergoes an ATP-dependent autophosphorylation at a conserved histidine residue in the kinase core, and a phosphoryl group is then transferred to a conserved aspartate residue in the receiver domain. This Dictyostelium discoideum (Social amoeba) protein is Hybrid signal transduction histidine kinase K (dhkK).